Here is a 93-residue protein sequence, read N- to C-terminus: UPF0058 protein AF_0738 (93 aa).

This sequence belongs to the UPF0058 family.

This chain is UPF0058 protein AF_0738, found in Archaeoglobus fulgidus (strain ATCC 49558 / DSM 4304 / JCM 9628 / NBRC 100126 / VC-16).